Consider the following 360-residue polypeptide: S-adenosylmethionine:tRNA ribosyltransferase-isomerase (360 aa).

It belongs to the QueA family. In terms of assembly, monomer.

It is found in the cytoplasm. The enzyme catalyses 7-aminomethyl-7-carbaguanosine(34) in tRNA + S-adenosyl-L-methionine = epoxyqueuosine(34) in tRNA + adenine + L-methionine + 2 H(+). Its pathway is tRNA modification; tRNA-queuosine biosynthesis. Transfers and isomerizes the ribose moiety from AdoMet to the 7-aminomethyl group of 7-deazaguanine (preQ1-tRNA) to give epoxyqueuosine (oQ-tRNA). The chain is S-adenosylmethionine:tRNA ribosyltransferase-isomerase from Nitrobacter winogradskyi (strain ATCC 25391 / DSM 10237 / CIP 104748 / NCIMB 11846 / Nb-255).